The chain runs to 91 residues: MKTIFFFITFIVLVSSCTSNIMTKSISQVKSQFFSPALSPNVDPADEHIGHSPDDMKIIFCQQCAFHCIEKKKNIGNCENSICRCTLEDIL.

The first 19 residues, 1–19 (MKTIFFFITFIVLVSSCTS), serve as a signal peptide directing secretion. Cystine bridges form between Cys-61/Cys-78, Cys-64/Cys-83, and Cys-68/Cys-85.

This sequence belongs to the DEFL family.

The protein localises to the secreted. In Arabidopsis thaliana (Mouse-ear cress), this protein is Defensin-like protein 220.